We begin with the raw amino-acid sequence, 309 residues long: MFHILSIVNIIWLLLALCFGAAFCLNKFSVKLPNRVEHVFQDFIRYGKTKENIKRASWQLVFDLSKRYFYHFYVVSVMWNGLLLLFSIRSVVMSEAFPDWIIDVLGSLTGRSRGAWNEIHLSTLLLQVLLWVHTLRRLLECLFVSVFSDGVINVVQYAFGLSYYIILGLTVLCTNDSLPQSESVSFFNQLTWYHVVGTLLFFWASFLQHQSLSLLAKMRTDSSGKVETLAHKMPCGGWFELVSCPHYLAELLIYAAMCVCCGCASLTWWMVVLYVLCNQALAAQLCHEYYRSKFKTYPHHRKAFIPFVL.

Residues 1-3 (MFH) are Cytoplasmic-facing. Residues 4 to 24 (ILSIVNIIWLLLALCFGAAFC) traverse the membrane as a helical segment. Residues 25-67 (LNKFSVKLPNRVEHVFQDFIRYGKTKENIKRASWQLVFDLSKR) lie on the Lumenal side of the membrane. Residues 68 to 88 (YFYHFYVVSVMWNGLLLLFSI) traverse the membrane as a helical segment. Topologically, residues 89 to 114 (RSVVMSEAFPDWIIDVLGSLTGRSRG) are cytoplasmic. A helical transmembrane segment spans residues 115–135 (AWNEIHLSTLLLQVLLWVHTL). Residues 136–150 (RRLLECLFVSVFSDG) are Lumenal-facing. The helical transmembrane segment at 151-171 (VINVVQYAFGLSYYIILGLTV) threads the bilayer. Over 172 to 185 (LCTNDSLPQSESVS) the chain is Cytoplasmic. Residues 186-206 (FFNQLTWYHVVGTLLFFWASF) traverse the membrane as a helical segment. The Lumenal segment spans residues 207–255 (LQHQSLSLLAKMRTDSSGKVETLAHKMPCGGWFELVSCPHYLAELLIYA). Residues 256–276 (AMCVCCGCASLTWWMVVLYVL) form a helical membrane-spanning segment. Over 277 to 309 (CNQALAAQLCHEYYRSKFKTYPHHRKAFIPFVL) the chain is Cytoplasmic.

The protein belongs to the steroid 5-alpha reductase family. Polyprenal reductase subfamily.

It is found in the endoplasmic reticulum membrane. The catalysed reaction is a di-trans,poly-cis-dolichal + NADP(+) = a di-trans,poly-cis-polyprenal + NADPH + H(+). The enzyme catalyses a 3-oxo-5alpha-steroid + NADP(+) = a 3-oxo-Delta(4)-steroid + NADPH + H(+). It carries out the reaction androst-4-ene-3,17-dione + NADPH + H(+) = 5alpha-androstan-3,17-dione + NADP(+). It catalyses the reaction 17beta-hydroxy-5alpha-androstan-3-one + NADP(+) = testosterone + NADPH + H(+). It participates in protein modification; protein glycosylation. Functionally, plays a key role in early steps of protein N-linked glycosylation by being involved in the conversion of polyprenol into dolichol. Acts as a polyprenal reductase that mediates the reduction of polyprenal into dolichal in a NADP-dependent mechanism. Dolichols are required for the synthesis of dolichol-linked monosaccharides and the oligosaccharide precursor used for N-glycosylation. Also able to convert testosterone (T) into 5-alpha-dihydrotestosterone (DHT). The protein is Polyprenal reductase (srd5a3) of Danio rerio (Zebrafish).